A 158-amino-acid chain; its full sequence is Cyclic pyranopterin monophosphate synthase (158 aa).

Residues 75-77 (LCH) and 113-114 (ME) each bind substrate. Asp128 is a catalytic residue.

This sequence belongs to the MoaC family. Homohexamer; trimer of dimers.

The catalysed reaction is (8S)-3',8-cyclo-7,8-dihydroguanosine 5'-triphosphate = cyclic pyranopterin phosphate + diphosphate. It functions in the pathway cofactor biosynthesis; molybdopterin biosynthesis. In terms of biological role, catalyzes the conversion of (8S)-3',8-cyclo-7,8-dihydroguanosine 5'-triphosphate to cyclic pyranopterin monophosphate (cPMP). This chain is Cyclic pyranopterin monophosphate synthase, found in Dinoroseobacter shibae (strain DSM 16493 / NCIMB 14021 / DFL 12).